The primary structure comprises 217 residues: Large ribosomal subunit protein bL21m (217 aa).

Residues 61-81 (PPKVTTATTPEAPAAVPTSTP) are compositionally biased toward low complexity. Residues 61–87 (PPKVTTATTPEAPAAVPTSTPFSQQPP) form a disordered region.

This sequence belongs to the bacterial ribosomal protein bL21 family. In terms of assembly, component of the mitochondrial large ribosomal subunit (mt-LSU). Mature N.crassa 74S mitochondrial ribosomes consist of a small (37S) and a large (54S) subunit. The 37S small subunit contains a 16S ribosomal RNA (16S mt-rRNA) and 32 different proteins. The 54S large subunit contains a 23S rRNA (23S mt-rRNA) and 42 different proteins.

The protein resides in the mitochondrion. Its function is as follows. Component of the mitochondrial ribosome (mitoribosome), a dedicated translation machinery responsible for the synthesis of mitochondrial genome-encoded proteins, including at least some of the essential transmembrane subunits of the mitochondrial respiratory chain. The mitoribosomes are attached to the mitochondrial inner membrane and translation products are cotranslationally integrated into the membrane. This Neurospora crassa (strain ATCC 24698 / 74-OR23-1A / CBS 708.71 / DSM 1257 / FGSC 987) protein is Large ribosomal subunit protein bL21m (mrpl49).